The sequence spans 119 residues: Large ribosomal subunit protein bL20 (119 aa).

The protein belongs to the bacterial ribosomal protein bL20 family.

Functionally, binds directly to 23S ribosomal RNA and is necessary for the in vitro assembly process of the 50S ribosomal subunit. It is not involved in the protein synthesizing functions of that subunit. The sequence is that of Large ribosomal subunit protein bL20 from Nitrosococcus oceani (strain ATCC 19707 / BCRC 17464 / JCM 30415 / NCIMB 11848 / C-107).